Here is a 666-residue protein sequence, read N- to C-terminus: Vicilin-like antimicrobial peptides 2-1 (666 aa).

An N-terminal signal peptide occupies residues 1–27; sequence MAINTSNLCSLLFLLSLFLLSTTVSLA. Disordered stretches follow at residues 161–191 and 219–254; these read QQKR…DPQQ and QQRQ…PYYF. Cupin type-1 domains follow at residues 271–410 and 455–625; these read SVLE…EKLR and YNLF…KEVE. The tract at residues 629 to 655 is disordered; that stretch reads NSQDQSIFFPGPRQHQQQSPRSTKQQQ. A compositionally biased stretch (low complexity) spans 642 to 655; sequence QHQQQSPRSTKQQQ.

It belongs to the 7S seed storage protein family.

It localises to the secreted. Antimicrobial peptides 2b, 2c and 2d have antibacterial and antifungal activity against a range of species. This chain is Vicilin-like antimicrobial peptides 2-1, found in Macadamia integrifolia (Macadamia nut).